The primary structure comprises 48 residues: Light-harvesting protein B-870 beta chain (48 aa).

Over 2–21 (AERKGSISGLTDDEAQEFHK) the chain is Cytoplasmic. A bacteriochlorophyll-binding residues include His-20 and His-38. Residues 22–44 (FWVQGFVGFTAVAVVAHFLVWVW) traverse the membrane as a helical segment. Over 45–48 (RPWL) the chain is Periplasmic.

In terms of assembly, an alpha/beta heterodimer. The core complex is formed by different alpha and beta chains, binding bacteriochlorophyll molecules, and arranged most probably in tetrameric structures disposed around the reaction center. The non-pigmented gamma chains may constitute additional components.

It localises to the cell inner membrane. Its function is as follows. Antenna complexes are light-harvesting systems, which transfer the excitation energy to the reaction centers. The sequence is that of Light-harvesting protein B-870 beta chain (pufB) from Rubrivivax gelatinosus (Rhodocyclus gelatinosus).